The primary structure comprises 343 residues: TATA box-binding protein-like 2 (343 aa).

The disordered stretch occupies residues 71-152 (PDEVTQENKD…SDSLSLASIT (82 aa)). Basic and acidic residues predominate over residues 76 to 90 (QENKDQPVISKHETE). Residues 94–127 (ESQSPQSRLPSPSEQDVGLGLNSSSLSNSHSQLH) show a composition bias toward low complexity. A compositionally biased stretch (polar residues) spans 143–152 (SDSLSLASIT).

Belongs to the TBP family. As to quaternary structure, interacts with TAF3. As to expression, ubiquitously expressed in all tissues examined with highest levels in heart, lung, ovary, spleen and testes.

The protein resides in the cytoplasm. Its subcellular location is the nucleus. Functionally, transcription factor required in complex with TAF3 for the differentiation of myoblasts into myocytes. The complex replaces TFIID at specific promoters at an early stage in the differentiation process. The chain is TATA box-binding protein-like 2 from Homo sapiens (Human).